Here is a 145-residue protein sequence, read N- to C-terminus: Putative pre-16S rRNA nuclease (145 aa).

It belongs to the YqgF nuclease family.

Its subcellular location is the cytoplasm. In terms of biological role, could be a nuclease involved in processing of the 5'-end of pre-16S rRNA. The protein is Putative pre-16S rRNA nuclease of Limosilactobacillus fermentum (strain NBRC 3956 / LMG 18251) (Lactobacillus fermentum).